A 1114-amino-acid polypeptide reads, in one-letter code: Hephaestin-like protein (1114 aa).

The N-terminal stretch at 1-26 (MMDRSNAAFVLTACFIFSQLICHVAA) is a signal peptide. Plastocyanin-like domains are found at residues 27–210 (ITRT…LICR), 218–365 (QQSG…VTKC), 380–562 (KRTY…LLTC), 572–719 (TRKD…VNTC), 730–915 (KTRD…LIIC), and 924–1114 (TEER…LLKA). The Extracellular segment spans residues 27 to 1091 (ITRTYYIAAV…KTTPKPITAA (1065 aa)). N-linked (GlcNAc...) asparagine glycosylation is present at N121. 4 residues coordinate Cu cation: H129, H131, H189, and H191. The cysteines at positions 183 and 209 are disulfide-linked. N-linked (GlcNAc...) asparagine glycosylation is present at N236. C284 and C365 are disulfide-bonded. Cu cation-binding residues include H303, C346, and H351. Residues N361, N478, and N489 are each glycosylated (N-linked (GlcNAc...) asparagine). Disulfide bonds link C536–C562 and C638–C719. The Cu cation site is built by H657, C700, H705, and M710. Residue N831 is glycosylated (N-linked (GlcNAc...) asparagine). C889 and C915 are oxidised to a cystine. N944 carries an N-linked (GlcNAc...) asparagine glycan. Residues H1014, H1017, H1019, H1059, C1060, H1061, H1065, and M1070 each contribute to the Cu cation site. Residues 1092-1112 (SSFVTSSIFIYLSFPVLAMLL) traverse the membrane as a helical segment. The Cytoplasmic segment spans residues 1113–1114 (KA).

This sequence belongs to the multicopper oxidase family. Cu cation serves as cofactor. In terms of tissue distribution, component of the acid-insoluble and acid-soluble organic matrix of the aragonitic skeleton (at protein level).

The protein resides in the membrane. Its function is as follows. May function as a ferroxidase and may be involved in copper transport and homeostasis. In Acropora millepora (Staghorn coral), this protein is Hephaestin-like protein.